A 384-amino-acid polypeptide reads, in one-letter code: S-adenosylmethionine synthase (384 aa).

ATP is bound at residue His-15. Asp-17 provides a ligand contact to Mg(2+). Glu-43 contacts K(+). Residues Glu-56 and Gln-99 each contribute to the L-methionine site. The segment at 99–109 is flexible loop; sequence QSPDINQGVDR. Residues 164 to 166, 230 to 231, Asp-239, 245 to 246, Ala-262, and Lys-266 contribute to the ATP site; these read DAK, RF, and RK. Asp-239 contacts L-methionine. Lys-270 is an L-methionine binding site.

It belongs to the AdoMet synthase family. As to quaternary structure, homotetramer; dimer of dimers. The cofactor is Mg(2+). K(+) serves as cofactor.

The protein localises to the cytoplasm. It carries out the reaction L-methionine + ATP + H2O = S-adenosyl-L-methionine + phosphate + diphosphate. The protein operates within amino-acid biosynthesis; S-adenosyl-L-methionine biosynthesis; S-adenosyl-L-methionine from L-methionine: step 1/1. In terms of biological role, catalyzes the formation of S-adenosylmethionine (AdoMet) from methionine and ATP. The overall synthetic reaction is composed of two sequential steps, AdoMet formation and the subsequent tripolyphosphate hydrolysis which occurs prior to release of AdoMet from the enzyme. In Erwinia tasmaniensis (strain DSM 17950 / CFBP 7177 / CIP 109463 / NCPPB 4357 / Et1/99), this protein is S-adenosylmethionine synthase.